A 346-amino-acid chain; its full sequence is Acetyl-coenzyme A carboxylase carboxyl transferase subunit beta (346 aa).

Positions 24–292 (LWIKCPKSGD…LPEVEPIAVA (269 aa)) constitute a CoA carboxyltransferase N-terminal domain. The segment covering 300 to 311 (AEAEAAPDEVVE) has biased composition (acidic residues). Positions 300–346 (AEAEAAPDEVVEVEAPAVDEIVEEKPAATKAKPRSKAKSKAAPKTDE) are disordered. The span at 330–340 (AKPRSKAKSKA) shows a compositional bias: basic residues.

The protein belongs to the AccD/PCCB family. Acetyl-CoA carboxylase is a heterohexamer composed of biotin carboxyl carrier protein (AccB), biotin carboxylase (AccC) and two subunits each of ACCase subunit alpha (AccA) and ACCase subunit beta (AccD).

It localises to the cytoplasm. It carries out the reaction N(6)-carboxybiotinyl-L-lysyl-[protein] + acetyl-CoA = N(6)-biotinyl-L-lysyl-[protein] + malonyl-CoA. Its pathway is lipid metabolism; malonyl-CoA biosynthesis; malonyl-CoA from acetyl-CoA: step 1/1. Functionally, component of the acetyl coenzyme A carboxylase (ACC) complex. Biotin carboxylase (BC) catalyzes the carboxylation of biotin on its carrier protein (BCCP) and then the CO(2) group is transferred by the transcarboxylase to acetyl-CoA to form malonyl-CoA. This Hirschia baltica (strain ATCC 49814 / DSM 5838 / IFAM 1418) protein is Acetyl-coenzyme A carboxylase carboxyl transferase subunit beta.